A 739-amino-acid chain; its full sequence is Phosphoribosylformylglycinamidine synthase subunit PurL (739 aa).

His-49 is a catalytic residue. ATP contacts are provided by Tyr-52 and Lys-91. Glu-93 contacts Mg(2+). Residues 94 to 97 and Arg-116 contribute to the substrate site; that span reads SHNH. Catalysis depends on His-95, which acts as the Proton acceptor. Asp-117 lines the Mg(2+) pocket. Gln-240 lines the substrate pocket. Mg(2+) is bound at residue Asp-268. Position 312 to 314 (312 to 314) interacts with substrate; sequence ESQ. 2 residues coordinate ATP: Asp-493 and Gly-530. Asn-531 is a Mg(2+) binding site. A substrate-binding site is contributed by Ser-533.

It belongs to the FGAMS family. Monomer. Part of the FGAM synthase complex composed of 1 PurL, 1 PurQ and 2 PurS subunits.

It localises to the cytoplasm. It carries out the reaction N(2)-formyl-N(1)-(5-phospho-beta-D-ribosyl)glycinamide + L-glutamine + ATP + H2O = 2-formamido-N(1)-(5-O-phospho-beta-D-ribosyl)acetamidine + L-glutamate + ADP + phosphate + H(+). It functions in the pathway purine metabolism; IMP biosynthesis via de novo pathway; 5-amino-1-(5-phospho-D-ribosyl)imidazole from N(2)-formyl-N(1)-(5-phospho-D-ribosyl)glycinamide: step 1/2. Functionally, part of the phosphoribosylformylglycinamidine synthase complex involved in the purines biosynthetic pathway. Catalyzes the ATP-dependent conversion of formylglycinamide ribonucleotide (FGAR) and glutamine to yield formylglycinamidine ribonucleotide (FGAM) and glutamate. The FGAM synthase complex is composed of three subunits. PurQ produces an ammonia molecule by converting glutamine to glutamate. PurL transfers the ammonia molecule to FGAR to form FGAM in an ATP-dependent manner. PurS interacts with PurQ and PurL and is thought to assist in the transfer of the ammonia molecule from PurQ to PurL. This is Phosphoribosylformylglycinamidine synthase subunit PurL from Parvibaculum lavamentivorans (strain DS-1 / DSM 13023 / NCIMB 13966).